The sequence spans 419 residues: Probable dual-specificity RNA methyltransferase RlmN (419 aa).

The disordered stretch occupies residues 1–21; it reads MTAESDSPDGPVSAGTGRPVR. Glu124 functions as the Proton acceptor in the catalytic mechanism. Residues 130-369 enclose the Radical SAM core domain; sequence YPDRATVCVS…ATTVRDTRGR (240 aa). Cys137 and Cys375 are oxidised to a cystine. Cys144, Cys148, and Cys151 together coordinate [4Fe-4S] cluster. S-adenosyl-L-methionine contacts are provided by residues 199-200, Ser233, 256-258, and Asn332; these read GE and SLH. Cys375 (S-methylcysteine intermediate) is an active-site residue. The tract at residues 383 to 419 is disordered; it reads AGRARRVESARPVESARPVGVAGAASGSPAHGSRVLR. A compositionally biased stretch (low complexity) spans 397–419; the sequence is SARPVGVAGAASGSPAHGSRVLR.

This sequence belongs to the radical SAM superfamily. RlmN family. Requires [4Fe-4S] cluster as cofactor.

It is found in the cytoplasm. It carries out the reaction adenosine(2503) in 23S rRNA + 2 reduced [2Fe-2S]-[ferredoxin] + 2 S-adenosyl-L-methionine = 2-methyladenosine(2503) in 23S rRNA + 5'-deoxyadenosine + L-methionine + 2 oxidized [2Fe-2S]-[ferredoxin] + S-adenosyl-L-homocysteine. The enzyme catalyses adenosine(37) in tRNA + 2 reduced [2Fe-2S]-[ferredoxin] + 2 S-adenosyl-L-methionine = 2-methyladenosine(37) in tRNA + 5'-deoxyadenosine + L-methionine + 2 oxidized [2Fe-2S]-[ferredoxin] + S-adenosyl-L-homocysteine. Specifically methylates position 2 of adenine 2503 in 23S rRNA and position 2 of adenine 37 in tRNAs. In Frankia alni (strain DSM 45986 / CECT 9034 / ACN14a), this protein is Probable dual-specificity RNA methyltransferase RlmN.